A 369-amino-acid chain; its full sequence is Histidinol-phosphate aminotransferase 2 (369 aa).

Position 231 is an N6-(pyridoxal phosphate)lysine (K231).

This sequence belongs to the class-II pyridoxal-phosphate-dependent aminotransferase family. Histidinol-phosphate aminotransferase subfamily. As to quaternary structure, homodimer. Requires pyridoxal 5'-phosphate as cofactor.

It carries out the reaction L-histidinol phosphate + 2-oxoglutarate = 3-(imidazol-4-yl)-2-oxopropyl phosphate + L-glutamate. It participates in amino-acid biosynthesis; L-histidine biosynthesis; L-histidine from 5-phospho-alpha-D-ribose 1-diphosphate: step 7/9. The sequence is that of Histidinol-phosphate aminotransferase 2 from Legionella pneumophila subsp. pneumophila (strain Philadelphia 1 / ATCC 33152 / DSM 7513).